Reading from the N-terminus, the 217-residue chain is Ras-related protein RABA1g (217 aa).

20–27 provides a ligand contact to GTP; sequence GDSGVGKS. The Effector region motif lies at 42–50; the sequence is SKSTIGVEF. Residues 68–72, 126–129, and 156–157 contribute to the GTP site; these read DTAGQ, NKAD, and SA. 2 S-geranylgeranyl cysteine lipidation sites follow: Cys-214 and Cys-215.

Belongs to the small GTPase superfamily. Rab family.

It is found in the cell membrane. Its function is as follows. Intracellular vesicle trafficking and protein transport. In Arabidopsis thaliana (Mouse-ear cress), this protein is Ras-related protein RABA1g (RABA1G).